The chain runs to 646 residues: Calcium-dependent protein kinase 2 (646 aa).

Glycine 2 carries N-myristoyl glycine lipidation. Residue cysteine 5 is the site of S-palmitoyl cysteine attachment. Residues 27–169 form a disordered region; sequence RIGAEQASSS…HMRRVSSAGL (143 aa). The segment covering 32–43 has biased composition (polar residues); the sequence is QASSSSHGNGQV. 2 stretches are compositionally biased toward basic and acidic residues: residues 73–119 and 126–157; these read PETK…KREV and AKPE…EPQK. The region spanning 186 to 444 is the Protein kinase domain; the sequence is YSLGRKLGQG…AHQVLCHPWV (259 aa). ATP-binding positions include 192 to 200 and lysine 215; that span reads LGQGQFGTT. Aspartate 310 acts as the Proton acceptor in catalysis. At serine 350 the chain carries Phosphoserine. The autoinhibitory domain stretch occupies residues 450 to 480; the sequence is APDKPLDSAVLSRMKQFSAMNKFKKMALRVI. 4 EF-hand domains span residues 487–522, 523–558, 559–592, and 593–628; these read EEIA…VGAN, LKES…LNKI, ERED…EEFG, and VEDA…GSIM. Residues aspartate 500, aspartate 502, serine 504, glutamine 506, glutamate 511, aspartate 536, aspartate 538, serine 540, threonine 542, glutamate 547, aspartate 572, aspartate 574, serine 576, glutamate 583, aspartate 606, aspartate 608, aspartate 610, arginine 612, and glutamate 617 each contribute to the Ca(2+) site.

The protein belongs to the protein kinase superfamily. Ser/Thr protein kinase family. CDPK subfamily. As to quaternary structure, interacts with 14-3-3 proteins.

Its subcellular location is the endoplasmic reticulum membrane. It catalyses the reaction L-seryl-[protein] + ATP = O-phospho-L-seryl-[protein] + ADP + H(+). The enzyme catalyses L-threonyl-[protein] + ATP = O-phospho-L-threonyl-[protein] + ADP + H(+). Its activity is regulated as follows. Activated by calcium. Autophosphorylation may play an important role in the regulation of the kinase activity. Its function is as follows. May play a role in signal transduction pathways that involve calcium as a second messenger. The sequence is that of Calcium-dependent protein kinase 2 (CPK2) from Arabidopsis thaliana (Mouse-ear cress).